The sequence spans 943 residues: Isoleucine--tRNA ligase (943 aa).

Positions 59 to 69 (PYANGQIHLGH) match the 'HIGH' region motif. L-isoleucyl-5'-AMP is bound at residue E577. The 'KMSKS' region motif lies at 618-622 (KMSKS). Residue K621 coordinates ATP. Zn(2+) contacts are provided by C906, C909, C926, and C929.

It belongs to the class-I aminoacyl-tRNA synthetase family. IleS type 1 subfamily. As to quaternary structure, monomer. Zn(2+) is required as a cofactor.

The protein localises to the cytoplasm. The catalysed reaction is tRNA(Ile) + L-isoleucine + ATP = L-isoleucyl-tRNA(Ile) + AMP + diphosphate. In terms of biological role, catalyzes the attachment of isoleucine to tRNA(Ile). As IleRS can inadvertently accommodate and process structurally similar amino acids such as valine, to avoid such errors it has two additional distinct tRNA(Ile)-dependent editing activities. One activity is designated as 'pretransfer' editing and involves the hydrolysis of activated Val-AMP. The other activity is designated 'posttransfer' editing and involves deacylation of mischarged Val-tRNA(Ile). This chain is Isoleucine--tRNA ligase, found in Xylella fastidiosa (strain M12).